The following is a 146-amino-acid chain: Phospholipase A2, membrane associated (146 aa).

Residues 1-21 (MKVLLLLAASIMAFGSIQVQG) form the signal peptide. Intrachain disulfides connect C47–C139, C49–C65, C64–C119, C70–C146, C71–C112, C80–C105, and C98–C110. Residues H48, G50, and G52 each coordinate Ca(2+). The active site involves H68. D69 contacts Ca(2+). D113 is a catalytic residue.

The protein belongs to the phospholipase A2 family. Requires Ca(2+) as cofactor. Mainly in the Paneth cells adjacent to the stem population in the small intestines.

It is found in the secreted. It localises to the cell membrane. The protein resides in the mitochondrion outer membrane. The enzyme catalyses a 1,2-diacyl-sn-glycero-3-phosphoethanolamine + H2O = a 1-acyl-sn-glycero-3-phosphoethanolamine + a fatty acid + H(+). It catalyses the reaction 1-hexadecanoyl-2-(9Z-octadecenoyl)-sn-glycero-3-phosphoethanolamine + H2O = 1-hexadecanoyl-sn-glycero-3-phosphoethanolamine + (9Z)-octadecenoate + H(+). It carries out the reaction 1-hexadecanoyl-2-(9Z,12Z-octadecadienoyl)-sn-glycero-3-phosphoethanolamine + H2O = 1-hexadecanoyl-sn-glycero-3-phosphoethanolamine + (9Z,12Z)-octadecadienoate + H(+). The catalysed reaction is 1-hexadecanoyl-2-(5Z,8Z,11Z,14Z-eicosatetraenoyl)-sn-glycero-3-phosphoethanolamine + H2O = 1-hexadecanoyl-sn-glycero-3-phosphoethanolamine + (5Z,8Z,11Z,14Z)-eicosatetraenoate + H(+). The enzyme catalyses N-hexadecanoyl-1,2-di-(9Z-octadecenoyl)-sn-glycero-3-phosphoethanolamine + H2O = N-hexadecanoyl-1-(9Z-octadecenoyl)-sn-glycero-3-phosphoethanolamine + (9Z)-octadecenoate + H(+). It catalyses the reaction 1,2-dihexadecanoyl-sn-glycero-3-phospho-(1'-sn-glycerol) + H2O = 1-hexadecanoyl-sn-glycero-3-phospho-(1'-sn-glycerol) + hexadecanoate + H(+). It carries out the reaction 1-hexadecanoyl-2-(9Z-octadecenoyl)-sn-glycero-3-phosphoglycerol + H2O = 1-hexadecanoyl-sn-glycero-3-phosphoglycerol + (9Z)-octadecenoate + H(+). The catalysed reaction is 1-hexadecanoyl-2-(9Z-octadecenoyl)-sn-glycero-3-phospho-(1'-sn-glycerol) + H2O = 1-hexadecanoyl-sn-glycero-3-phospho-(1'-sn-glycerol) + (9Z)-octadecenoate + H(+). The enzyme catalyses a 1,2-diacyl-sn-glycero-3-phosphocholine + H2O = a 1-acyl-sn-glycero-3-phosphocholine + a fatty acid + H(+). It catalyses the reaction 1,2-dihexadecanoyl-sn-glycero-3-phosphocholine + H2O = 1-hexadecanoyl-sn-glycero-3-phosphocholine + hexadecanoate + H(+). It carries out the reaction 1-hexadecanoyl-2-(9Z-octadecenoyl)-sn-glycero-3-phosphocholine + H2O = 1-hexadecanoyl-sn-glycero-3-phosphocholine + (9Z)-octadecenoate + H(+). The catalysed reaction is 1-hexadecanoyl-2-(9Z,12Z-octadecadienoyl)-sn-glycero-3-phosphocholine + H2O = (9Z,12Z)-octadecadienoate + 1-hexadecanoyl-sn-glycero-3-phosphocholine + H(+). The enzyme catalyses 1-hexadecanoyl-2-(4Z,7Z,10Z,13Z,16Z,19Z-docosahexaenoyl)-sn-glycero-3-phosphocholine + H2O = (4Z,7Z,10Z,13Z,16Z,19Z)-docosahexaenoate + 1-hexadecanoyl-sn-glycero-3-phosphocholine + H(+). In terms of biological role, secretory calcium-dependent phospholipase A2 that primarily targets extracellular phospholipids with implications in host antimicrobial defense, inflammatory response and tissue regeneration. Hydrolyzes the ester bond of the fatty acyl group attached at sn-2 position of phospholipids (phospholipase A2 activity) with preference for phosphatidylethanolamines and phosphatidylglycerols over phosphatidylcholines. Contributes to lipid remodeling of cellular membranes and generation of lipid mediators involved in pathogen clearance. Displays bactericidal activity against Gram-positive bacteria by directly hydrolyzing phospholipids of the bacterial membrane. Upon sterile inflammation, targets membrane phospholipids of extracellular mitochondria released from activated platelets, generating free unsaturated fatty acids such as arachidonate that is used by neighboring leukocytes to synthesize inflammatory eicosanoids such as leukotrienes. Simultaneously, by compromising mitochondrial membrane integrity, promotes the release in circulation of potent damage-associated molecular pattern molecules that activate the innate immune response. Plays a stem cell regulator role in the intestinal crypt. Within intracellular compartment mediates Paneth cell differentiation and its stem cell supporting functions by inhibiting Wnt signaling pathway in intestinal stem cell (ICS). Secreted in the intestinal lumen upon inflammation, acts in an autocrine way and promotes prostaglandin E2 synthesis that stimulates Wnt signaling pathway in ICS cells and tissue regeneration. May play a role in the biosynthesis of N-acyl ethanolamines that regulate energy metabolism and inflammation. Hydrolyzes N-acyl phosphatidylethanolamines to N-acyl lysophosphatidylethanolamines, which are further cleaved by a lysophospholipase D to release N-acyl ethanolamines. Independent of its catalytic activity, acts as a ligand for integrins. Binds to and activates integrins ITGAV:ITGB3, ITGA4:ITGB1 and ITGA5:ITGB1. Binds to a site (site 2) which is distinct from the classical ligand-binding site (site 1) and induces integrin conformational changes and enhanced ligand binding to site 1. Induces cell proliferation in an integrin-dependent manner. The polypeptide is Phospholipase A2, membrane associated (Pla2g2a) (Mus musculus (Mouse)).